The sequence spans 243 residues: UPF0246 protein SAG2081 (243 aa).

The protein belongs to the UPF0246 family.

The chain is UPF0246 protein SAG2081 from Streptococcus agalactiae serotype V (strain ATCC BAA-611 / 2603 V/R).